A 105-amino-acid chain; its full sequence is MDKKELFDALDDFSQQLLVTLADVEAIKKNLKSLVEENTALRLENSKLRERLGEVEADAPVKAKHVRESVRRIYRDGFHVCNDFYGQRREQDEECMFCDELLYRE.

Histidine 79, cysteine 81, cysteine 95, and cysteine 98 together coordinate Zn(2+).

The protein belongs to the YabA family. In terms of assembly, homotetramer. Interacts with both DnaA and DnaN, acting as a bridge between these two proteins. It depends on Zn(2+) as a cofactor.

The protein resides in the cytoplasm. Its subcellular location is the nucleoid. Involved in control of chromosome replication initiation. Inhibits the cooperative binding of DnaA to the oriC region, thus negatively regulating initiation of chromosome replication. Inhibits the ability of DnaA-ATP to form a helix on DNA; does not disassemble preformed DnaA-DNA helices. Decreases the residence time of DnaA on the chromosome at its binding sites (oriC, replication forks and promoter-binding sites). Tethers DnaA to the replication machinery via the DNA polymerase beta sliding clamp subunit (dnaN). Associates with oriC and other DnaA targets on the chromosome in a DnaA-dependent manner. This is Replication initiation control protein YabA from Streptococcus pneumoniae serotype 2 (strain D39 / NCTC 7466).